A 399-amino-acid chain; its full sequence is MTENKPSEQTNELKDLVVEKEFNQTLDDLLANPFGSDGESAASIVNNETDAAPRLVDMLTETNKKQALELSKQIEPGNQAAILGYGAPAQAKLHDFSHSMLAHVQKQDVGPIGDIISDLMYRLQEADPDELAARNKNVFTKMFHRVKQSINEITSKYQKIGTQIDRIALKLEHSKKRLMEDNSFLEQLYDKNKDYFQALNIYIAAGELKLEEINTKMLPELRKKAEQTGDQMDYQEVNDLTQFADRLDKRVYDLRLSRQITIQQAPQIRLIQNTNQALAEKIQSSIMTAIPLWKNQVAIALTLLRQQQAVAAQRQVSETTNELLKRNADMLKTNAIETARENERGIVDIETLKETQSSLIETLQETLKIQQEGRAKRAVAEKELVTMEQELKERLLEMK.

It belongs to the TelA family.

This is an uncharacterized protein from Listeria monocytogenes serovar 1/2a (strain ATCC BAA-679 / EGD-e).